The primary structure comprises 476 residues: Aspartyl/glutamyl-tRNA(Asn/Gln) amidotransferase subunit B (476 aa).

This sequence belongs to the GatB/GatE family. GatB subfamily. As to quaternary structure, heterotrimer of A, B and C subunits.

The enzyme catalyses L-glutamyl-tRNA(Gln) + L-glutamine + ATP + H2O = L-glutaminyl-tRNA(Gln) + L-glutamate + ADP + phosphate + H(+). The catalysed reaction is L-aspartyl-tRNA(Asn) + L-glutamine + ATP + H2O = L-asparaginyl-tRNA(Asn) + L-glutamate + ADP + phosphate + 2 H(+). Functionally, allows the formation of correctly charged Asn-tRNA(Asn) or Gln-tRNA(Gln) through the transamidation of misacylated Asp-tRNA(Asn) or Glu-tRNA(Gln) in organisms which lack either or both of asparaginyl-tRNA or glutaminyl-tRNA synthetases. The reaction takes place in the presence of glutamine and ATP through an activated phospho-Asp-tRNA(Asn) or phospho-Glu-tRNA(Gln). This Shouchella clausii (strain KSM-K16) (Alkalihalobacillus clausii) protein is Aspartyl/glutamyl-tRNA(Asn/Gln) amidotransferase subunit B.